The primary structure comprises 339 residues: Methionine import ATP-binding protein MetN 2 (339 aa).

Residues 2–241 form the ABC transporter domain; the sequence is ISFNNVSKVY…PKTKTTQNFV (240 aa). 38 to 45 lines the ATP pocket; it reads GFSGAGKS.

This sequence belongs to the ABC transporter superfamily. Methionine importer (TC 3.A.1.24) family. As to quaternary structure, the complex is composed of two ATP-binding proteins (MetN), two transmembrane proteins (MetI) and a solute-binding protein (MetQ).

It is found in the cell membrane. The enzyme catalyses L-methionine(out) + ATP + H2O = L-methionine(in) + ADP + phosphate + H(+). The catalysed reaction is D-methionine(out) + ATP + H2O = D-methionine(in) + ADP + phosphate + H(+). Functionally, part of the ABC transporter complex MetNIQ involved in methionine import. Responsible for energy coupling to the transport system. The polypeptide is Methionine import ATP-binding protein MetN 2 (Bacillus cereus (strain ATCC 10987 / NRS 248)).